The sequence spans 321 residues: Putative zinc finger CCCH domain-containing protein 9 (321 aa).

2 disordered regions span residues 1–59 (MADA…PGKK) and 181–269 (REAE…NLQE). Residues 10-29 (EAERRSDETESRSIKEPKEK) show a composition bias toward basic and acidic residues. The C3H1-type zinc-finger motif lies at 55–83 (RPGKKDCQFYLKNGLCRYRSSCRFNHPTQ). Residues 164 to 290 (TEWRFERERM…EARLRLEQIR (127 aa)) adopt a coiled-coil conformation. Basic and acidic residues-rich tracts occupy residues 181–224 (REAE…REAQ) and 231–244 (RQRD…REAQ).

The protein is Putative zinc finger CCCH domain-containing protein 9 of Arabidopsis thaliana (Mouse-ear cress).